We begin with the raw amino-acid sequence, 77 residues long: Conotoxin Lt7.1 (77 aa).

Positions 1–19 (MEKLTILLLVAALLMSTQG) are cleaved as a signal peptide. Positions 20–49 (LIQSGGENRPKEKIKFLSKRKTVAESWWEG) are excised as a propeptide. Intrachain disulfides connect Cys-51–Cys-65, Cys-58–Cys-69, and Cys-64–Cys-74.

This sequence belongs to the conotoxin O2 superfamily. Expressed by the venom duct.

It localises to the secreted. This Conus litteratus (Lettered cone) protein is Conotoxin Lt7.1.